A 469-amino-acid chain; its full sequence is DNA repair and recombination protein rad22 (469 aa).

The disordered stretch occupies residues 265 to 296 (PAANNHHSEKAGTQINNKDKGSHNSAKPVQRS). The span at 287–296 (HNSAKPVQRS) shows a compositional bias: polar residues. 2 positions are modified to phosphoserine: Ser296 and Ser319. A disordered region spans residues 429 to 469 (LHDSTTSHNKSDLMRTNSDPQSAMRSRENYDATVDKKAKKG). Residues 431 to 452 (DSTTSHNKSDLMRTNSDPQSAM) are compositionally biased toward polar residues. Positions 453–469 (RSRENYDATVDKKAKKG) are enriched in basic and acidic residues.

This sequence belongs to the RAD52 family. In terms of assembly, interacts with rhp51.

The protein resides in the nucleus. Its function is as follows. Active in the repair of DNA damage and in mating-type switching. Probably involved in the repair of DNA double-strands breaks. Has a role in promoting S phase completion. This Schizosaccharomyces pombe (strain 972 / ATCC 24843) (Fission yeast) protein is DNA repair and recombination protein rad22 (rad22).